The following is a 432-amino-acid chain: Tol-Pal system protein TolB (432 aa).

The first 29 residues, 1-29 (MMRNVWKSGLRRSAWIGLLMVLCVGVARA), serve as a signal peptide directing secretion.

Belongs to the TolB family. The Tol-Pal system is composed of five core proteins: the inner membrane proteins TolA, TolQ and TolR, the periplasmic protein TolB and the outer membrane protein Pal. They form a network linking the inner and outer membranes and the peptidoglycan layer.

The protein localises to the periplasm. Functionally, part of the Tol-Pal system, which plays a role in outer membrane invagination during cell division and is important for maintaining outer membrane integrity. This Ralstonia nicotianae (strain ATCC BAA-1114 / GMI1000) (Ralstonia solanacearum) protein is Tol-Pal system protein TolB.